The following is a 353-amino-acid chain: tRNA-specific 2-thiouridylase MnmA (353 aa).

ATP-binding positions include 7–14 (GLSGGVDS) and leucine 33. Cysteine 94 functions as the Nucleophile in the catalytic mechanism. The cysteines at positions 94 and 193 are disulfide-linked. Glycine 119 is a binding site for ATP. Residues 143–145 (KDQ) are interaction with tRNA. Residue cysteine 193 is the Cysteine persulfide intermediate of the active site. Residues 298-299 (RY) form an interaction with tRNA region.

It belongs to the MnmA/TRMU family.

The protein localises to the cytoplasm. It catalyses the reaction S-sulfanyl-L-cysteinyl-[protein] + uridine(34) in tRNA + AH2 + ATP = 2-thiouridine(34) in tRNA + L-cysteinyl-[protein] + A + AMP + diphosphate + H(+). Functionally, catalyzes the 2-thiolation of uridine at the wobble position (U34) of tRNA, leading to the formation of s(2)U34. In Picosynechococcus sp. (strain ATCC 27264 / PCC 7002 / PR-6) (Agmenellum quadruplicatum), this protein is tRNA-specific 2-thiouridylase MnmA.